A 427-amino-acid polypeptide reads, in one-letter code: Chaperone SurA (427 aa).

Residues 1-19 (MKIWKSILFTTLLSCGAVA) form the signal peptide. 2 consecutive PpiC domains span residues 170-268 (TVQY…KIED) and 277-377 (VTEV…EVLD).

It is found in the periplasm. It carries out the reaction [protein]-peptidylproline (omega=180) = [protein]-peptidylproline (omega=0). In terms of biological role, chaperone involved in the correct folding and assembly of outer membrane proteins. Recognizes specific patterns of aromatic residues and the orientation of their side chains, which are found more frequently in integral outer membrane proteins. May act in both early periplasmic and late outer membrane-associated steps of protein maturation. The protein is Chaperone SurA of Vibrio parahaemolyticus serotype O3:K6 (strain RIMD 2210633).